Consider the following 227-residue polypeptide: Floral homeotic protein DEFICIENS (227 aa).

The region spanning 3–57 is the MADS-box domain; it reads RGKIQIKRIENQTNRQVTYSKRRNGLFKKAHELSVLCDAKVSIIMISSTQKLHEY. The K-box domain occupies 84–174; that stretch reads YEKMQEHLKK…VLEFDARRED (91 aa).

The protein localises to the nucleus. Transcription factor involved in the genetic control of flower development. Acts in conjunction with GLOBOSA (glo). The protein is Floral homeotic protein DEFICIENS (DEFA) of Antirrhinum majus (Garden snapdragon).